A 210-amino-acid chain; its full sequence is Probable glutathione peroxidase 8 (210 aa).

Residues 21-40 (VLLSMTVGVGCLLLLQTQLL) form a helical membrane-spanning segment.

This sequence belongs to the glutathione peroxidase family.

Its subcellular location is the membrane. The catalysed reaction is 2 glutathione + H2O2 = glutathione disulfide + 2 H2O. In Tetraodon nigroviridis (Spotted green pufferfish), this protein is Probable glutathione peroxidase 8 (gpx8).